Here is a 485-residue protein sequence, read N- to C-terminus: Glutamate--tRNA ligase (485 aa).

The 'HIGH' region motif lies at 11–21 (PSPTGHLHIGN). Positions 252–256 (KLSKR) match the 'KMSKS' region motif. Position 255 (K255) interacts with ATP.

It belongs to the class-I aminoacyl-tRNA synthetase family. Glutamate--tRNA ligase type 1 subfamily. In terms of assembly, monomer.

The protein localises to the cytoplasm. It catalyses the reaction tRNA(Glu) + L-glutamate + ATP = L-glutamyl-tRNA(Glu) + AMP + diphosphate. Its function is as follows. Catalyzes the attachment of glutamate to tRNA(Glu) in a two-step reaction: glutamate is first activated by ATP to form Glu-AMP and then transferred to the acceptor end of tRNA(Glu). This Bacillus cereus (strain ATCC 14579 / DSM 31 / CCUG 7414 / JCM 2152 / NBRC 15305 / NCIMB 9373 / NCTC 2599 / NRRL B-3711) protein is Glutamate--tRNA ligase.